A 228-amino-acid polypeptide reads, in one-letter code: Sec-independent protein translocase protein TatB (228 aa).

A helical transmembrane segment spans residues 1–21; the sequence is MFDFGLGELVFVGIIALIVLG. Disordered stretches follow at residues 138–162 and 195–228; these read RSYASAETLGDSGQTGSTAEPAETD and PVPHTTSLRKQAISRKRDLRPKSRAKPKLRVRKS. Positions 206–228 are enriched in basic residues; that stretch reads AISRKRDLRPKSRAKPKLRVRKS.

Belongs to the TatB family. As to quaternary structure, the Tat system comprises two distinct complexes: a TatABC complex, containing multiple copies of TatA, TatB and TatC subunits, and a separate TatA complex, containing only TatA subunits. Substrates initially bind to the TatABC complex, which probably triggers association of the separate TatA complex to form the active translocon.

The protein localises to the cell inner membrane. Functionally, part of the twin-arginine translocation (Tat) system that transports large folded proteins containing a characteristic twin-arginine motif in their signal peptide across membranes. Together with TatC, TatB is part of a receptor directly interacting with Tat signal peptides. TatB may form an oligomeric binding site that transiently accommodates folded Tat precursor proteins before their translocation. This is Sec-independent protein translocase protein TatB from Neisseria meningitidis serogroup A / serotype 4A (strain DSM 15465 / Z2491).